The sequence spans 167 residues: Transcription factor HES-5 (167 aa).

The bHLH domain occupies 16–72 (KNRLRKPVVEKMRRDRINSSIEQLKLLLEQEFARHQPNSKLEKADILEMAVSYLKHS). The 32-residue stretch at 88–119 (YSEGYSWCLQEAVQFLTLHAASDTQMKLLYHF) folds into the Orange domain. Residues 124-138 (APAAPAKEPPAPGAA) are compositionally biased toward pro residues. The disordered stretch occupies residues 124 to 167 (APAAPAKEPPAPGAAPQPARSSAKAAAAAVSTSRQPACGLWRPW). Positions 139–160 (PQPARSSAKAAAAAVSTSRQPA) are enriched in low complexity. The WRPW motif motif lies at 164–167 (WRPW).

In terms of assembly, transcription repression requires formation of a complex with a corepressor protein of the Groucho/TLE family.

The protein localises to the nucleus. In terms of biological role, transcriptional repressor of genes that require a bHLH protein for their transcription. Plays an important role as neurogenesis negative regulator. This Mus musculus (Mouse) protein is Transcription factor HES-5 (Hes5).